Reading from the N-terminus, the 261-residue chain is Syntaxin-7 (261 aa).

Ser2 carries the post-translational modification N-acetylserine. Residues 2–238 are Cytoplasmic-facing; the sequence is SYTPGIGGDS…DYQRKSRKTL (237 aa). Thr4 carries the post-translational modification Phosphothreonine. A Phosphoserine modification is found at Ser45. Residues 47–68 adopt a coiled-coil conformation; the sequence is ELRQLLQQKQQYTNQLAKETDK. Ser75 is modified (phosphoserine). Thr79 carries the post-translational modification Phosphothreonine. A phosphoserine mark is found at Ser125, Ser126, Ser129, and Ser205. Residues 128–148 are disordered; sequence VSGGFPEDSSKEKNLVSWESQ. The t-SNARE coiled-coil homology domain maps to 165 to 227; it reads LRLIHERESS…QQANQQLSRA (63 aa). The helical; Anchor for type IV membrane protein transmembrane segment at 239–259 threads the bilayer; it reads CIIIFILVVRIVIICLIVWGL. The Vesicular segment spans residues 260-261; the sequence is KG.

This sequence belongs to the syntaxin family. As to quaternary structure, interacts with VPS11, VPS16 and VPS18. Interacts with VPS33A. Forms a SNARE complex with VTI1B, STX8 and VAMP8 which functions in the homotypic fusion of late endosomes. Component of the SNARE complex composed of STX7, STX8, VAMP7 and VTI1B that is required for heterotypic fusion of late endosomes with lysosomes. Interacts with TPC1.

The protein resides in the early endosome membrane. May be involved in protein trafficking from the plasma membrane to the early endosome (EE) as well as in homotypic fusion of endocytic organelles. Mediates the endocytic trafficking from early endosomes to late endosomes and lysosomes. The polypeptide is Syntaxin-7 (Stx7) (Mus musculus (Mouse)).